The chain runs to 195 residues: Killer cell lectin-like receptor subfamily G member 1 (195 aa).

Residues 1-38 are Cytoplasmic-facing; that stretch reads MTDSVIYSMLELPTATQAQNDYGPQQKSSSSRPSCSCL. The ITIM motif motif lies at 5–10; sequence VIYSML. Residues 39-59 traverse the membrane as a helical; Signal-anchor for type II membrane protein segment; it reads VAIALGLLTAVLLSVLLYQWI. The Extracellular portion of the chain corresponds to 60-195; the sequence is LCQGSNYSTC…KCPFADQALF (136 aa). N65 is a glycosylation site (N-linked (GlcNAc...) asparagine). C75 and C86 are disulfide-bonded. The C-type lectin domain occupies 82-185; it reads YGNHCYYFSV…CEVPLHWVCK (104 aa). N-linked (GlcNAc...) asparagine glycans are attached at residues N97, N137, and N150. 2 cysteine pairs are disulfide-bonded: C103–C184 and C163–C176.

As to quaternary structure, forms a monomer and homodimer; disulfide-linked. Interacts (via ITIM motif) with PTPN11 and INPP5D. Expressed specifically on natural killer (NK) cells and T-cells, mainly CD8 T-cells.

It localises to the cell membrane. Functionally, plays an inhibitory role on natural killer (NK) cells and T-cell functions upon binding to their non-MHC ligands. May mediate missing self recognition by binding to a highly conserved site on classical cadherins, enabling it to monitor expression of E-cadherin/CDH1, N-cadherin/CDH2 and R-cadherin/CDH4 on target cells. This Homo sapiens (Human) protein is Killer cell lectin-like receptor subfamily G member 1 (KLRG1).